Consider the following 833-residue polypeptide: Lon protease (833 aa).

Residues 3 to 198 enclose the Lon N-terminal domain; sequence YPFMATRGVI…LIFSFLVELK (196 aa). 390 to 397 contacts ATP; the sequence is GPPGTGKT. Residues 627 to 808 form the Lon proteolytic domain; sequence YERIGAVNGL…DEIFENLFGK (182 aa). Active-site residues include serine 714 and lysine 757.

It belongs to the peptidase S16 family. As to quaternary structure, homohexamer. Organized in a ring with a central cavity.

The protein localises to the cytoplasm. It catalyses the reaction Hydrolysis of proteins in presence of ATP.. In terms of biological role, ATP-dependent serine protease that mediates the selective degradation of mutant and abnormal proteins as well as certain short-lived regulatory proteins. Required for cellular homeostasis and for survival from DNA damage and developmental changes induced by stress. Degrades polypeptides processively to yield small peptide fragments that are 5 to 10 amino acids long. Binds to DNA in a double-stranded, site-specific manner. The polypeptide is Lon protease (Mycoplasma mobile (strain ATCC 43663 / 163K / NCTC 11711) (Mesomycoplasma mobile)).